Consider the following 372-residue polypeptide: Hydrogenase-1 small chain (372 aa).

A signal peptide (tat-type signal) is located at residues 1-45 (MNNEETFYQAMRRQGVTRRSFLKYCSLAATSLGLGAGMAPKIAWA). Topologically, residues 46–326 (LENKPRIPVV…QMGTHSTADT (281 aa)) are periplasmic. C62, C65, C160, C194, H232, C235, C260, and C266 together coordinate [4Fe-4S] cluster. Residues C275, C294, and C297 each coordinate [3Fe-4S] cluster. Residues 327-347 (VGLTALGVVAAAVGVHAVASA) traverse the membrane as a helical segment. The interval 347 to 372 (AVDQRRRHNQQPTETEHQPGNEDKQA) is disordered. Over 348 to 372 (VDQRRRHNQQPTETEHQPGNEDKQA) the chain is Cytoplasmic. Residues 360–372 (ETEHQPGNEDKQA) show a composition bias toward basic and acidic residues.

It belongs to the [NiFe]/[NiFeSe] hydrogenase small subunit family. As to quaternary structure, heterodimer of a large and a small subunit. [4Fe-4S] cluster is required as a cofactor. [3Fe-4S] cluster serves as cofactor. Post-translationally, predicted to be exported by the Tat system. The position of the signal peptide cleavage has not been experimentally proven.

The protein localises to the cell inner membrane. The catalysed reaction is H2 + A = AH2. Functionally, this is one of three E.coli hydrogenases synthesized in response to different physiological conditions. HYD1 is believed to have a role in hydrogen cycling during fermentative growth. The chain is Hydrogenase-1 small chain (hyaA) from Escherichia coli O6:H1 (strain CFT073 / ATCC 700928 / UPEC).